The following is a 222-amino-acid chain: MTLEFSGLGLAPEFVDYQHAWDVQRELHGKVVAGEAPSTVLLLEHAAVYTAGKLTEDHERPFDGTPVVAVDRGGKLTWHGPGQLIAYPILKLKNRAGIRDYVERLEAVMIAVMADYGIRAERIKGRAGVWVKADANGPDRKIAAIGIRVLNGVTMHGVAINCSNDLAPYGQIIACGITDAGVTTMSRETGKDIRPADIAERFVEEFRKHEEALVSSPEGALL.

The BPL/LPL catalytic domain occupies 34-214; the sequence is GEAPSTVLLL…EFRKHEEALV (181 aa). Residues 72-79, 144-146, and 157-159 contribute to the substrate site; these read RGGKLTWH, AIG, and GVA. Cys175 acts as the Acyl-thioester intermediate in catalysis.

Belongs to the LipB family.

Its subcellular location is the cytoplasm. It catalyses the reaction octanoyl-[ACP] + L-lysyl-[protein] = N(6)-octanoyl-L-lysyl-[protein] + holo-[ACP] + H(+). It participates in protein modification; protein lipoylation via endogenous pathway; protein N(6)-(lipoyl)lysine from octanoyl-[acyl-carrier-protein]: step 1/2. Its function is as follows. Catalyzes the transfer of endogenously produced octanoic acid from octanoyl-acyl-carrier-protein onto the lipoyl domains of lipoate-dependent enzymes. Lipoyl-ACP can also act as a substrate although octanoyl-ACP is likely to be the physiological substrate. The protein is Octanoyltransferase of Pseudarthrobacter chlorophenolicus (strain ATCC 700700 / DSM 12829 / CIP 107037 / JCM 12360 / KCTC 9906 / NCIMB 13794 / A6) (Arthrobacter chlorophenolicus).